Here is a 462-residue protein sequence, read N- to C-terminus: Neuronal acetylcholine receptor subunit non-alpha-2 (462 aa).

Residues 1–30 (MTLAVIGLFTLFTSIIAITPAREFVSLAER) form the signal peptide. At 31–234 (EDALLRELFQ…ITYSFILKRL (204 aa)) the chain is on the extracellular side. N-linked (GlcNAc...) asparagine glycans are attached at residues N53 and N168. Cysteines 155 and 169 form a disulfide. The next 3 membrane-spanning stretches (helical) occupy residues 235-259 (PLFY…VFYL), 267-284 (VSLS…LLVI), and 301-322 (YLLF…VINV). Topologically, residues 323 to 428 (HHRSSATYHP…WKFVAQVLDR (106 aa)) are cytoplasmic. Residues 362–372 (ELEPHSPDLKP) show a composition bias toward basic and acidic residues. A disordered region spans residues 362-384 (ELEPHSPDLKPRNKKGPPGPEGE). A helical membrane pass occupies residues 429-446 (IFLWTFLTVSVLGTILIF).

It belongs to the ligand-gated ion channel (TC 1.A.9) family. Acetylcholine receptor (TC 1.A.9.1) subfamily. As to quaternary structure, neuronal AChR seems to be composed of two different type of subunits: alpha and beta.

It localises to the postsynaptic cell membrane. Its subcellular location is the cell membrane. In terms of biological role, after binding acetylcholine, the AChR responds by an extensive change in conformation that affects all subunits and leads to opening of an ion-conducting channel across the plasma membrane. The protein is Neuronal acetylcholine receptor subunit non-alpha-2 of Carassius auratus (Goldfish).